A 451-amino-acid polypeptide reads, in one-letter code: Jacalin-related lectin 35 (451 aa).

Ala2 is modified (N-acetylalanine). Jacalin-type lectin domains are found at residues 2–143 (AKKL…YIIP), 156–297 (LTKL…YIIP), and 306–448 (SNTI…NVAP).

The protein belongs to the jacalin lectin family. In terms of assembly, component of the PYK10 complex, at least composed of PYK10/BGLU23, BGLU21, BGLU22, JAL22, JAL23, PBP1/JAL30, PBP2/JAL31, JAL32, JAL33, JAL34, JAL35, GLL22 and GLL23.

The chain is Jacalin-related lectin 35 (JAL35) from Arabidopsis thaliana (Mouse-ear cress).